A 546-amino-acid polypeptide reads, in one-letter code: Putative serine hydroxymethyltransferase, mitochondrial (546 aa).

A mitochondrion-targeting transit peptide spans M1–D64. At K305 the chain carries N6-(pyridoxal phosphate)lysine.

It belongs to the SHMT family. As to quaternary structure, homotetramer. Pyridoxal 5'-phosphate serves as cofactor.

The protein resides in the mitochondrion. It carries out the reaction (6R)-5,10-methylene-5,6,7,8-tetrahydrofolate + glycine + H2O = (6S)-5,6,7,8-tetrahydrofolate + L-serine. It participates in one-carbon metabolism; tetrahydrofolate interconversion. Functionally, interconversion of serine and glycine. This chain is Putative serine hydroxymethyltransferase, mitochondrial (cbs-2), found in Neurospora crassa (strain ATCC 24698 / 74-OR23-1A / CBS 708.71 / DSM 1257 / FGSC 987).